Here is a 546-residue protein sequence, read N- to C-terminus: Chaperonin GroEL (546 aa).

Residues threonine 29–proline 32, lysine 50, aspartate 86–threonine 90, glycine 414, and aspartate 492 contribute to the ATP site.

It belongs to the chaperonin (HSP60) family. Forms a cylinder of 14 subunits composed of two heptameric rings stacked back-to-back. Interacts with the co-chaperonin GroES.

Its subcellular location is the cytoplasm. It carries out the reaction ATP + H2O + a folded polypeptide = ADP + phosphate + an unfolded polypeptide.. Its function is as follows. Together with its co-chaperonin GroES, plays an essential role in assisting protein folding. The GroEL-GroES system forms a nano-cage that allows encapsulation of the non-native substrate proteins and provides a physical environment optimized to promote and accelerate protein folding. This Helicobacter pylori (strain G27) protein is Chaperonin GroEL.